The following is a 315-amino-acid chain: Homoserine kinase (315 aa).

97-107 is a binding site for ATP; the sequence is PPARGLGSSAT.

Belongs to the GHMP kinase family. Homoserine kinase subfamily.

The protein resides in the cytoplasm. It catalyses the reaction L-homoserine + ATP = O-phospho-L-homoserine + ADP + H(+). It functions in the pathway amino-acid biosynthesis; L-threonine biosynthesis; L-threonine from L-aspartate: step 4/5. In terms of biological role, catalyzes the ATP-dependent phosphorylation of L-homoserine to L-homoserine phosphate. In Prochlorococcus marinus (strain MIT 9515), this protein is Homoserine kinase.